Consider the following 192-residue polypeptide: Bifunctional protein PyrR (192 aa).

Substrate is bound by residues 49-50 (SG), R90, 111-119 (DDVLFSGRT), R144, and V168. The PRPP-binding signature appears at 107–119 (VILVDDVLFSGRT).

The protein belongs to the purine/pyrimidine phosphoribosyltransferase family. PyrR subfamily.

The catalysed reaction is UMP + diphosphate = 5-phospho-alpha-D-ribose 1-diphosphate + uracil. Regulates the transcription of the pyrimidine nucleotide (pyr) operon in response to exogenous pyrimidines. In terms of biological role, also displays a weak uracil phosphoribosyltransferase activity which is not physiologically significant. In Corynebacterium glutamicum (strain ATCC 13032 / DSM 20300 / JCM 1318 / BCRC 11384 / CCUG 27702 / LMG 3730 / NBRC 12168 / NCIMB 10025 / NRRL B-2784 / 534), this protein is Bifunctional protein PyrR.